A 431-amino-acid polypeptide reads, in one-letter code: Chaperone SurA (431 aa).

Positions 1 to 20 are cleaved as a signal peptide; it reads MKNWRTFILGLALCANGALA. PpiC domains lie at 171–272 and 282–382; these read GAEF…KVND and VTEV…QLID.

The protein resides in the periplasm. The enzyme catalyses [protein]-peptidylproline (omega=180) = [protein]-peptidylproline (omega=0). Functionally, chaperone involved in the correct folding and assembly of outer membrane proteins. Recognizes specific patterns of aromatic residues and the orientation of their side chains, which are found more frequently in integral outer membrane proteins. May act in both early periplasmic and late outer membrane-associated steps of protein maturation. In Sodalis glossinidius (strain morsitans), this protein is Chaperone SurA.